A 254-amino-acid polypeptide reads, in one-letter code: Small ribosomal subunit protein uS2 (254 aa).

This sequence belongs to the universal ribosomal protein uS2 family.

This Borrelia duttonii (strain Ly) protein is Small ribosomal subunit protein uS2.